The primary structure comprises 466 residues: UDP-N-acetylmuramoylalanine--D-glutamate ligase (466 aa).

Residue 128 to 134 (GTNGKST) coordinates ATP.

It belongs to the MurCDEF family.

Its subcellular location is the cytoplasm. It carries out the reaction UDP-N-acetyl-alpha-D-muramoyl-L-alanine + D-glutamate + ATP = UDP-N-acetyl-alpha-D-muramoyl-L-alanyl-D-glutamate + ADP + phosphate + H(+). It participates in cell wall biogenesis; peptidoglycan biosynthesis. Cell wall formation. Catalyzes the addition of glutamate to the nucleotide precursor UDP-N-acetylmuramoyl-L-alanine (UMA). The chain is UDP-N-acetylmuramoylalanine--D-glutamate ligase from Bartonella henselae (strain ATCC 49882 / DSM 28221 / CCUG 30454 / Houston 1) (Rochalimaea henselae).